The primary structure comprises 256 residues: Thiazole synthase (256 aa).

Lys-95 functions as the Schiff-base intermediate with DXP in the catalytic mechanism. 1-deoxy-D-xylulose 5-phosphate contacts are provided by residues Gly-156, 182 to 183 (AG), and 204 to 205 (NT).

Belongs to the ThiG family. In terms of assembly, homotetramer. Forms heterodimers with either ThiH or ThiS.

The protein resides in the cytoplasm. The enzyme catalyses [ThiS sulfur-carrier protein]-C-terminal-Gly-aminoethanethioate + 2-iminoacetate + 1-deoxy-D-xylulose 5-phosphate = [ThiS sulfur-carrier protein]-C-terminal Gly-Gly + 2-[(2R,5Z)-2-carboxy-4-methylthiazol-5(2H)-ylidene]ethyl phosphate + 2 H2O + H(+). The protein operates within cofactor biosynthesis; thiamine diphosphate biosynthesis. Catalyzes the rearrangement of 1-deoxy-D-xylulose 5-phosphate (DXP) to produce the thiazole phosphate moiety of thiamine. Sulfur is provided by the thiocarboxylate moiety of the carrier protein ThiS. In vitro, sulfur can be provided by H(2)S. In Escherichia coli O157:H7, this protein is Thiazole synthase.